The following is a 108-amino-acid chain: Large ribosomal subunit protein bL21 (108 aa).

It belongs to the bacterial ribosomal protein bL21 family. As to quaternary structure, part of the 50S ribosomal subunit. Contacts protein L20.

In terms of biological role, this protein binds to 23S rRNA in the presence of protein L20. The chain is Large ribosomal subunit protein bL21 from Buchnera aphidicola subsp. Acyrthosiphon pisum (strain 5A).